Reading from the N-terminus, the 194-residue chain is Putative manganese efflux pump MntP (194 aa).

6 helical membrane passes run 3–23 (PITI…AAIG), 37–57 (LYVA…GWLL), 65–85 (IAAF…IHMI), 112–132 (LAAT…SLAF), 137–157 (IGIV…FGVM), and 170–190 (AEIV…YEHL).

The protein belongs to the MntP (TC 9.B.29) family.

It localises to the cell inner membrane. Its function is as follows. Probably functions as a manganese efflux pump. In Xylella fastidiosa (strain M12), this protein is Putative manganese efflux pump MntP.